A 453-amino-acid chain; its full sequence is Ribosomal protein uS12 methylthiotransferase RimO (453 aa).

Positions 9 to 124 constitute an MTTase N-terminal domain; that stretch reads PKVGFVSLGC…VMEAVHTHLP (116 aa). [4Fe-4S] cluster is bound by residues Cys18, Cys54, Cys83, Cys155, Cys159, and Cys162. Residues 141–382 enclose the Radical SAM core domain; that stretch reads LTPKHYAYLK…MEVAERVSAR (242 aa). Residues 385–453 enclose the TRAM domain; that stretch reads QRKVGKTLRV…ADGHDLWGEV (69 aa).

The protein belongs to the methylthiotransferase family. RimO subfamily. [4Fe-4S] cluster serves as cofactor.

It is found in the cytoplasm. It carries out the reaction L-aspartate(89)-[ribosomal protein uS12]-hydrogen + (sulfur carrier)-SH + AH2 + 2 S-adenosyl-L-methionine = 3-methylsulfanyl-L-aspartate(89)-[ribosomal protein uS12]-hydrogen + (sulfur carrier)-H + 5'-deoxyadenosine + L-methionine + A + S-adenosyl-L-homocysteine + 2 H(+). In terms of biological role, catalyzes the methylthiolation of an aspartic acid residue of ribosomal protein uS12. The chain is Ribosomal protein uS12 methylthiotransferase RimO from Ralstonia nicotianae (strain ATCC BAA-1114 / GMI1000) (Ralstonia solanacearum).